The following is a 218-amino-acid chain: MICIPIIDNTVEKALISAKEALKYGDIVEFRLDLLDNLTKFDIEKFAKIPSIITIRANWEGGAWKESNNKRIEFLKHAIKHGAKFIDVELKEEKNLELVTYRNEIGSKTKIIVSYHDFEKTPEINELIDVVEKELKIGDIAKFATFSNSKKDVLKILEVMNKYPGDIIAIGMGESGKLTRILGLRFGSILTFASMKGKSSAPGQIDVTKLKEILNLIE.

Residues 29–31 (EFR) and R56 contribute to the 3-dehydroquinate site. H116 serves as the catalytic Proton donor/acceptor. The active-site Schiff-base intermediate with substrate is the K142. Positions 180, 200, and 204 each coordinate 3-dehydroquinate.

It belongs to the type-I 3-dehydroquinase family. As to quaternary structure, homodimer.

It carries out the reaction 3-dehydroquinate = 3-dehydroshikimate + H2O. It functions in the pathway metabolic intermediate biosynthesis; chorismate biosynthesis; chorismate from D-erythrose 4-phosphate and phosphoenolpyruvate: step 3/7. Its function is as follows. Involved in the third step of the chorismate pathway, which leads to the biosynthesis of aromatic amino acids. Catalyzes the cis-dehydration of 3-dehydroquinate (DHQ) and introduces the first double bond of the aromatic ring to yield 3-dehydroshikimate. The sequence is that of 3-dehydroquinate dehydratase from Methanococcus vannielii (strain ATCC 35089 / DSM 1224 / JCM 13029 / OCM 148 / SB).